A 75-amino-acid polypeptide reads, in one-letter code: 8.9 kDa basic protein (75 aa).

This Orgyia pseudotsugata (Douglas-fir tussock moth) protein is 8.9 kDa basic protein (P8.9).